Here is a 300-residue protein sequence, read N- to C-terminus: DNA repair protein PprA (300 aa).

T88 is subject to Phosphothreonine. Phosphoserine is present on S128. T160 carries the post-translational modification Phosphothreonine.

Phosphorylated by RqkA in vitro. Phosphorylated primarily at Thr-88, and to a little extent at Ser-128 and Thr-160.

Phosphorylation increases DNA binding affinity. DsDNA-binding protein that contributes to the ionizing radiation resistance of D.radiodurans. Plays a role in DNA repair and genome reconstitution, and is necessary for recovery from severe genomic fragmentation as a result of exposure to severe levels of ionizing radiation. In vitro, binds to double-stranded DNA carrying strand breaks and stimulates the DNA end-joining reaction catalyzed by DNA ligases. Thus, PprA plays a critical role in a non-homologous end-joining (NHEJ) pathway for the repair of radiation-induced DNA double-strands breaks. Cannot bind to dsDNA without strand breaks or single-stranded DNA. This chain is DNA repair protein PprA (pprA), found in Deinococcus radiodurans (strain ATCC 13939 / DSM 20539 / JCM 16871 / CCUG 27074 / LMG 4051 / NBRC 15346 / NCIMB 9279 / VKM B-1422 / R1).